Here is a 130-residue protein sequence, read N- to C-terminus: Phosphomevalonate dehydratase small subunit (130 aa).

The Proton acceptor role is filled by Ser62.

The protein belongs to the AcnX type II small subunit family. In terms of assembly, heterodimer composed of a large subunit (PMDh-L) and a small subunit (PMDh-S).

The catalysed reaction is (R)-5-phosphomevalonate = (2E)-3-methyl-5-phosphooxypent-2-enoate + H2O. The protein operates within isoprenoid biosynthesis; isopentenyl diphosphate biosynthesis via mevalonate pathway. Functionally, component of a hydro-lyase that catalyzes the dehydration of mevalonate 5-phosphate (MVA5P) to form trans-anhydromevalonate 5-phosphate (tAHMP). Involved in the archaeal mevalonate (MVA) pathway, which provides fundamental precursors for isoprenoid biosynthesis, such as isopentenyl diphosphate (IPP) and dimethylallyl diphosphate (DMAPP). The polypeptide is Phosphomevalonate dehydratase small subunit (Thermococcus sibiricus (strain DSM 12597 / MM 739)).